Reading from the N-terminus, the 659-residue chain is Nitrate import ATP-binding protein NrtC (659 aa).

The ABC transporter domain maps to 5-239 (LAVDHVHQVF…RPRQRLEMME (235 aa)). 42 to 49 (GHSGCGKS) lines the ATP pocket. Positions 255–278 (QQQRRAKRRAKAAAPAPAVAASQQ) are linker. The nrtA-like stretch occupies residues 279-659 (KTVRLGFLPG…VAPIPLATSA (381 aa)).

Belongs to the ABC transporter superfamily. Nitrate/nitrite/cyanate uptake transporter (NitT) (TC 3.A.1.16) family. The complex is composed of two ATP-binding proteins (NrtC and NrtD), two transmembrane proteins (NrtB) and a solute-binding protein (NrtA).

It localises to the cell inner membrane. The catalysed reaction is nitrate(out) + ATP + H2O = nitrate(in) + ADP + phosphate + H(+). With respect to regulation, transport is inhibited by ammonium. The C-terminal domain of NrtC is involved in the ammonium-promoted inhibition of the nitrate/nitrite transporter. Functionally, part of the ABC transporter complex NrtABCD involved in nitrate uptake. The complex is probably also involved in nitrite transport. Probably responsible for energy coupling to the transport system. This Synechococcus elongatus (strain ATCC 33912 / PCC 7942 / FACHB-805) (Anacystis nidulans R2) protein is Nitrate import ATP-binding protein NrtC.